The sequence spans 230 residues: MSNTPIELKGSSFTLSVVHLHDAHPEVIRKALEEKIAQAPAFLKNAPVVVNVAGLDGSINWQQLHQTFIDSGLHLVGISGCQDDALKAEISRAGLALLTEGKASAPRAAKPAETPAPPAAALRTRLIDLPVRSGQRIYAPGADLVVTSHVSAGAELIADGNIHVYGTMRGRALAGAGGDKEAQIFSTNLAAELVSIAGVYWLSDQIPAEFYNKAARLRLADGALTVQPLN.

Belongs to the MinC family. As to quaternary structure, interacts with MinD and FtsZ.

Its function is as follows. Cell division inhibitor that blocks the formation of polar Z ring septums. Rapidly oscillates between the poles of the cell to destabilize FtsZ filaments that have formed before they mature into polar Z rings. Prevents FtsZ polymerization. This chain is Probable septum site-determining protein MinC, found in Cronobacter sakazakii (strain ATCC BAA-894) (Enterobacter sakazakii).